The primary structure comprises 251 residues: 2,3-bisphosphoglycerate-dependent phosphoglycerate mutase (251 aa).

Substrate contacts are provided by residues 11 to 18 (RHGNSDWN), 24 to 25 (TG), Arg-63, 90 to 93 (ERHY), Lys-101, 117 to 118 (RR), and 185 to 186 (GN). The Tele-phosphohistidine intermediate role is filled by His-12. Glu-90 (proton donor/acceptor) is an active-site residue.

It belongs to the phosphoglycerate mutase family. BPG-dependent PGAM subfamily.

The catalysed reaction is (2R)-2-phosphoglycerate = (2R)-3-phosphoglycerate. The protein operates within carbohydrate degradation; glycolysis; pyruvate from D-glyceraldehyde 3-phosphate: step 3/5. In terms of biological role, catalyzes the interconversion of 2-phosphoglycerate and 3-phosphoglycerate. The sequence is that of 2,3-bisphosphoglycerate-dependent phosphoglycerate mutase from Clavibacter sepedonicus (Clavibacter michiganensis subsp. sepedonicus).